Consider the following 264-residue polypeptide: Undecaprenyl-diphosphatase (264 aa).

The next 8 helical transmembrane spans lie at 15–37, 42–62, 84–104, 108–128, 143–163, 182–202, 217–237, and 243–263; these read GLTE…LLGF, AASF…VLYW, YLLF…HDFI, LFNP…ILIV, VTPK…WPGF, IAAE…TGYD, FLAV…KGFI, and LTLR…LFFW.

This sequence belongs to the UppP family.

It localises to the cell inner membrane. The catalysed reaction is di-trans,octa-cis-undecaprenyl diphosphate + H2O = di-trans,octa-cis-undecaprenyl phosphate + phosphate + H(+). Its function is as follows. Catalyzes the dephosphorylation of undecaprenyl diphosphate (UPP). Confers resistance to bacitracin. This is Undecaprenyl-diphosphatase from Maridesulfovibrio salexigens (strain ATCC 14822 / DSM 2638 / NCIMB 8403 / VKM B-1763) (Desulfovibrio salexigens).